The primary structure comprises 302 residues: 1,2-dihydroxynaphthalene dioxygenase (302 aa).

VOC domains follow at residues 9-124 (ELGY…IFWG) and 149-270 (GLGH…PGWR). Residue H152 participates in Fe cation binding. Substrate-binding positions include H152, 199–200 (DH), H215, and Y256. H215 serves as a coordination point for Fe cation. E266 is a Fe cation binding site.

The protein belongs to the extradiol ring-cleavage dioxygenase family. Requires Fe(2+) as cofactor.

The enzyme catalyses naphthalene-1,2-diol + O2 = 2-hydroxychromene-2-carboxylate + H(+). It functions in the pathway aromatic compound metabolism; naphthalene degradation. With respect to regulation, inhibited by bathophenanthroline sulfonate, o-phenanthroline, 8-hydroxyquinoline, 2,2'-dipyridyl and p-chlormercuribenzoate. Also inhibited by Hg(2+), Cu(2+), Co(2+) and Fe(3+) ions. In terms of biological role, involved in the naphthalene catabolic pathway. Catalyzes the meta-cleavage of 1,2-dihydroxynaphthalene (1,2-DHN) to yield 2-hydroxychromene-2-carboxylic acid. Can also cleave 3-methylcatechol and 4-methylcatechol. This is 1,2-dihydroxynaphthalene dioxygenase (nahC) from Pseudomonas putida (Arthrobacter siderocapsulatus).